We begin with the raw amino-acid sequence, 339 residues long: tRNA-specific 2-thiouridylase MnmA (339 aa).

ATP-binding positions include 6-13 (AMSGGVDS) and Met32. Catalysis depends on Cys92, which acts as the Nucleophile. A disulfide bridge connects residues Cys92 and Cys186. Gly116 is a binding site for ATP. Positions 134–136 (KDQ) are interaction with tRNA. The active-site Cysteine persulfide intermediate is Cys186. The segment at 288 to 289 (RY) is interaction with tRNA.

Belongs to the MnmA/TRMU family.

It localises to the cytoplasm. It carries out the reaction S-sulfanyl-L-cysteinyl-[protein] + uridine(34) in tRNA + AH2 + ATP = 2-thiouridine(34) in tRNA + L-cysteinyl-[protein] + A + AMP + diphosphate + H(+). Catalyzes the 2-thiolation of uridine at the wobble position (U34) of tRNA, leading to the formation of s(2)U34. The chain is tRNA-specific 2-thiouridylase MnmA from Campylobacter curvus (strain 525.92).